The following is a 476-amino-acid chain: Aspartyl/glutamyl-tRNA(Asn/Gln) amidotransferase subunit B (476 aa).

This sequence belongs to the GatB/GatE family. GatB subfamily. As to quaternary structure, heterotrimer of A, B and C subunits.

It catalyses the reaction L-glutamyl-tRNA(Gln) + L-glutamine + ATP + H2O = L-glutaminyl-tRNA(Gln) + L-glutamate + ADP + phosphate + H(+). The catalysed reaction is L-aspartyl-tRNA(Asn) + L-glutamine + ATP + H2O = L-asparaginyl-tRNA(Asn) + L-glutamate + ADP + phosphate + 2 H(+). Its function is as follows. Allows the formation of correctly charged Asn-tRNA(Asn) or Gln-tRNA(Gln) through the transamidation of misacylated Asp-tRNA(Asn) or Glu-tRNA(Gln) in organisms which lack either or both of asparaginyl-tRNA or glutaminyl-tRNA synthetases. The reaction takes place in the presence of glutamine and ATP through an activated phospho-Asp-tRNA(Asn) or phospho-Glu-tRNA(Gln). This chain is Aspartyl/glutamyl-tRNA(Asn/Gln) amidotransferase subunit B, found in Lacticaseibacillus casei (strain BL23) (Lactobacillus casei).